The sequence spans 290 residues: Small ribosomal subunit biogenesis GTPase RsgA (290 aa).

The CP-type G domain maps to 62-219 (RTCLKRPAVA…VADTPGFSRL (158 aa)). Residues 111–114 (NKAD) and 161–169 (GPSGVGKSS) contribute to the GTP site. Residues cysteine 243, cysteine 248, histidine 250, and cysteine 256 each contribute to the Zn(2+) site.

It belongs to the TRAFAC class YlqF/YawG GTPase family. RsgA subfamily. As to quaternary structure, monomer. Associates with 30S ribosomal subunit, binds 16S rRNA. Zn(2+) serves as cofactor.

It localises to the cytoplasm. Functionally, one of several proteins that assist in the late maturation steps of the functional core of the 30S ribosomal subunit. Helps release RbfA from mature subunits. May play a role in the assembly of ribosomal proteins into the subunit. Circularly permuted GTPase that catalyzes slow GTP hydrolysis, GTPase activity is stimulated by the 30S ribosomal subunit. The protein is Small ribosomal subunit biogenesis GTPase RsgA of Moorella thermoacetica (strain ATCC 39073 / JCM 9320).